Consider the following 284-residue polypeptide: Elongation factor Ts (284 aa).

The involved in Mg(2+) ion dislocation from EF-Tu stretch occupies residues 80–83 (TDFV).

Belongs to the EF-Ts family.

Its subcellular location is the cytoplasm. Associates with the EF-Tu.GDP complex and induces the exchange of GDP to GTP. It remains bound to the aminoacyl-tRNA.EF-Tu.GTP complex up to the GTP hydrolysis stage on the ribosome. The sequence is that of Elongation factor Ts from Neisseria meningitidis serogroup A / serotype 4A (strain DSM 15465 / Z2491).